The sequence spans 407 residues: Carbamoyl phosphate synthase small chain (407 aa).

The interval 1-203 is CPSase; that stretch reads MSQNESGTIA…EPCGEYEGKE (203 aa). Residues S61, G255, and G257 each contribute to the L-glutamine site. The region spanning 207-405 is the Glutamine amidotransferase type-1 domain; sequence TVAAVDLGIK…CELMKNNSKE (199 aa). C283 acts as the Nucleophile in catalysis. The L-glutamine site is built by F284, Q287, N325, G327, and F328. Catalysis depends on residues H378 and E380.

It belongs to the CarA family. As to quaternary structure, composed of two chains; the small (or glutamine) chain promotes the hydrolysis of glutamine to ammonia, which is used by the large (or ammonia) chain to synthesize carbamoyl phosphate. Tetramer of heterodimers (alpha,beta)4.

It carries out the reaction hydrogencarbonate + L-glutamine + 2 ATP + H2O = carbamoyl phosphate + L-glutamate + 2 ADP + phosphate + 2 H(+). The catalysed reaction is L-glutamine + H2O = L-glutamate + NH4(+). Its pathway is amino-acid biosynthesis; L-arginine biosynthesis; carbamoyl phosphate from bicarbonate: step 1/1. It functions in the pathway pyrimidine metabolism; UMP biosynthesis via de novo pathway; (S)-dihydroorotate from bicarbonate: step 1/3. In terms of biological role, small subunit of the glutamine-dependent carbamoyl phosphate synthetase (CPSase). CPSase catalyzes the formation of carbamoyl phosphate from the ammonia moiety of glutamine, carbonate, and phosphate donated by ATP, constituting the first step of 2 biosynthetic pathways, one leading to arginine and/or urea and the other to pyrimidine nucleotides. The small subunit (glutamine amidotransferase) binds and cleaves glutamine to supply the large subunit with the substrate ammonia. The polypeptide is Carbamoyl phosphate synthase small chain (Bifidobacterium longum (strain NCC 2705)).